The chain runs to 258 residues: Type III pantothenate kinase (258 aa).

D6–V13 is a binding site for ATP. Residues Y100 and G107 to R110 each bind substrate. Catalysis depends on D109, which acts as the Proton acceptor. D129 serves as a coordination point for K(+). T132 contributes to the ATP binding site. Residue T184 coordinates substrate.

The protein belongs to the type III pantothenate kinase family. Homodimer. NH4(+) serves as cofactor. The cofactor is K(+).

It is found in the cytoplasm. The enzyme catalyses (R)-pantothenate + ATP = (R)-4'-phosphopantothenate + ADP + H(+). It functions in the pathway cofactor biosynthesis; coenzyme A biosynthesis; CoA from (R)-pantothenate: step 1/5. Catalyzes the phosphorylation of pantothenate (Pan), the first step in CoA biosynthesis. This Geobacillus thermodenitrificans (strain NG80-2) protein is Type III pantothenate kinase.